The primary structure comprises 92 residues: MAKRTKKVGIVGKYGTRYGASLRKMVKKIEISQHAKYTCSFCGKTKMKRRAVGIWHCGSCMKTVAGGAWTYNTTSAVTVKSAIKRLKEMKDQ.

Zn(2+) contacts are provided by C39, C42, C57, and C60. The C4-type zinc-finger motif lies at 39–60 (CSFCGKTKMKRRAVGIWHCGSC).

It belongs to the eukaryotic ribosomal protein eL43 family. In terms of assembly, component of the large ribosomal subunit.

The protein localises to the cytoplasm. In terms of biological role, component of the large ribosomal subunit. The ribosome is a large ribonucleoprotein complex responsible for the synthesis of proteins in the cell. This chain is Large ribosomal subunit protein eL43 (rpl37a), found in Ictalurus punctatus (Channel catfish).